The sequence spans 283 residues: Homeobox protein BarH-like 2 (283 aa).

2 disordered regions span residues 107–141 (AAAA…RRSR) and 198–283 (KGGQ…PPLS). The segment covering 122 to 132 (SSESETEQPTP) has biased composition (polar residues). The homeobox DNA-binding region spans 139 to 198 (RSRTIFTELQLMGLEKKFQKQKYLSTPDRLDLAQSLGLTQLQVKTWYQNRRMKWKKMVLK). The segment covering 268 to 277 (QPQELSEASS) has biased composition (low complexity).

Belongs to the BAR homeobox family. As to expression, nervous system, particularly in the telencephalon, spinal cord, and dorsal root ganglia.

It is found in the nucleus. In terms of biological role, transcription factor. Binds optimally to the DNA consensus sequence 5'-YYTAATGRTTTTY-3'. May control the expression of neural adhesion molecules such as L1 or Ng-CAM during embryonic development of both the central and peripherical nervous system. May be involved in controlling adhesive processes in keratinizing epithelia. The polypeptide is Homeobox protein BarH-like 2 (Barx2) (Mus musculus (Mouse)).